The sequence spans 104 residues: uncharacterized protein (104 aa).

In terms of domain architecture, HIT spans 3–104; it reads VFEKIIQGEI…HFHILSGDKH (102 aa). Residues 93 to 97 carry the Histidine triad motif motif; sequence HLHFH.

This is an uncharacterized protein from Helicobacter pylori (strain J99 / ATCC 700824) (Campylobacter pylori J99).